Here is a 154-residue protein sequence, read N- to C-terminus: Endoribonuclease YbeY (154 aa).

Zn(2+) is bound by residues H118, H122, and H128.

Belongs to the endoribonuclease YbeY family. Requires Zn(2+) as cofactor.

The protein localises to the cytoplasm. Single strand-specific metallo-endoribonuclease involved in late-stage 70S ribosome quality control and in maturation of the 3' terminus of the 16S rRNA. This is Endoribonuclease YbeY from Macrococcus caseolyticus (strain JCSC5402) (Macrococcoides caseolyticum).